Consider the following 414-residue polypeptide: Tryptophan synthase beta chain (414 aa).

The interval 1–26 (MVSTFSRKNQNYKKDDLNQPSKDGRF) is disordered. A compositionally biased stretch (basic and acidic residues) spans 12 to 26 (YKKDDLNQPSKDGRF). Residue Lys-109 is modified to N6-(pyridoxal phosphate)lysine.

Belongs to the TrpB family. Tetramer of two alpha and two beta chains. Pyridoxal 5'-phosphate is required as a cofactor.

The catalysed reaction is (1S,2R)-1-C-(indol-3-yl)glycerol 3-phosphate + L-serine = D-glyceraldehyde 3-phosphate + L-tryptophan + H2O. It functions in the pathway amino-acid biosynthesis; L-tryptophan biosynthesis; L-tryptophan from chorismate: step 5/5. Functionally, the beta subunit is responsible for the synthesis of L-tryptophan from indole and L-serine. The protein is Tryptophan synthase beta chain of Prochlorococcus marinus (strain MIT 9215).